A 221-amino-acid chain; its full sequence is uncharacterized protein (221 aa).

Positions 1–22 (MGLDNFTAPSTGTTPAGSPFLR) are disordered. A compositionally biased stretch (polar residues) spans 7 to 16 (TAPSTGTTPA).

This sequence belongs to the IIV-6 259R family.

This is an uncharacterized protein from Invertebrate iridescent virus 3 (IIV-3).